An 87-amino-acid polypeptide reads, in one-letter code: RNA-binding protein Hfq (87 aa).

One can recognise a Sm domain in the interval 9-68 (DPFLNTLRRERIPVSIYLVNGIKLQGYIESFDQFVILLKNSISQMIYKHAISTVVPNHTN). A disordered region spans residues 66-87 (HTNNQEHNQSQYNNNNACISKP).

This sequence belongs to the Hfq family. As to quaternary structure, homohexamer.

Functionally, RNA chaperone that binds small regulatory RNA (sRNAs) and mRNAs to facilitate mRNA translational regulation in response to envelope stress, environmental stress and changes in metabolite concentrations. Also binds with high specificity to tRNAs. The sequence is that of RNA-binding protein Hfq from Wigglesworthia glossinidia brevipalpis.